Consider the following 60-residue polypeptide: UPF0434 protein SG0997 (60 aa).

This sequence belongs to the UPF0434 family.

The chain is UPF0434 protein SG0997 from Sodalis glossinidius (strain morsitans).